The sequence spans 227 residues: PKHD-type hydroxylase Bxeno_B2194 (227 aa).

Residues 78–178 form the Fe2OG dioxygenase domain; that stretch reads KVFPPLFNRY…RVASFFWIQS (101 aa). Residues histidine 96, aspartate 98, and histidine 159 each contribute to the Fe cation site. Arginine 169 serves as a coordination point for 2-oxoglutarate.

Fe(2+) serves as cofactor. Requires L-ascorbate as cofactor.

The protein is PKHD-type hydroxylase Bxeno_B2194 of Paraburkholderia xenovorans (strain LB400).